A 184-amino-acid chain; its full sequence is Lactoylglutathione lyase (184 aa).

Position 2 is an N-acetylalanine (alanine 2). Cysteine 19 and cysteine 20 are joined by a disulfide. Positions 31–177 (LLQQTMLRIK…DGYWIEILNP (147 aa)) constitute a VOC domain. Positions 34 and 38 each coordinate substrate. Residue glutamine 34 participates in Zn(2+) binding. Glutamate 100 contacts Zn(2+). Residue asparagine 104 coordinates substrate. Threonine 107 is subject to Phosphothreonine. Residues arginine 123 and histidine 127 each contribute to the substrate site. Histidine 127 contacts Zn(2+). At cysteine 139 the chain carries S-glutathionyl cysteine. Lysine 148 carries the post-translational modification N6-acetyllysine; alternate. The residue at position 148 (lysine 148) is an N6-succinyllysine; alternate. Residue 157 to 158 (KM) participates in substrate binding. A Zn(2+)-binding site is contributed by glutamate 173. Residue glutamate 173 is the Proton donor/acceptor of the active site.

It belongs to the glyoxalase I family. In terms of assembly, homodimer. It depends on Zn(2+) as a cofactor. Post-translationally, glutathionylation at Cys-139 inhibits enzyme activity. Phosphorylated at Thr-107 in the presence of CaMK2. However, this is a consensus site for phosphorylation by CK2 so phosphorylation may be mediated by CK2 rather than CaMK2. Phosphorylation is induced by TNF and suppresses the TNF-induced transcriptional activity of NF-kappa-B. In terms of processing, exists in a nitric oxide (NO)-modified form. The exact nature of the modification is unknown, but it suppresses the TNF-induced transcriptional activity of NF-kappa-B.

It catalyses the reaction (R)-S-lactoylglutathione = methylglyoxal + glutathione. It functions in the pathway secondary metabolite metabolism; methylglyoxal degradation; (R)-lactate from methylglyoxal: step 1/2. Its function is as follows. Catalyzes the conversion of hemimercaptal, formed from methylglyoxal and glutathione, to S-lactoylglutathione. Involved in the regulation of TNF-induced transcriptional activity of NF-kappa-B. Required for normal osteoclastogenesis. The sequence is that of Lactoylglutathione lyase (Glo1) from Rattus norvegicus (Rat).